The following is an 803-amino-acid chain: Leucine--tRNA ligase (803 aa).

The 'HIGH' region signature appears at 40–51 (PYPSGAGLHVGH). The 'KMSKS' region motif lies at 575-579 (KMSKS). Residue lysine 578 coordinates ATP.

This sequence belongs to the class-I aminoacyl-tRNA synthetase family.

It is found in the cytoplasm. It carries out the reaction tRNA(Leu) + L-leucine + ATP = L-leucyl-tRNA(Leu) + AMP + diphosphate. The sequence is that of Leucine--tRNA ligase from Listeria monocytogenes serotype 4a (strain HCC23).